A 219-amino-acid chain; its full sequence is uncharacterized protein (219 aa).

Positions Met-1–Gly-22 are cleaved as a signal peptide. Cys-23 carries N-palmitoyl cysteine lipidation. The S-diacylglycerol cysteine moiety is linked to residue Cys-23. The interval Ser-26–Asn-89 is disordered. Residues Gln-32 to Gln-42 show a composition bias toward polar residues. A compositionally biased stretch (basic and acidic residues) spans Thr-43–Ala-61.

The protein resides in the cell membrane. This is an uncharacterized protein from Bacillus subtilis (strain 168).